The chain runs to 655 residues: MGGVYNGDGGTCHRGNIPCPLAAQMKTGEVGRQLYELNMHTGVFSHTVVTSDFEAIQVLYAHRNQSNLLVMEILLKRIKTSAEPITIQLESSFKPQSEDIAFQNAPDYKGGRHIFGQTASSEVPGGVRPVVHLIWTPVTPTLTLPANQSQSSWTFLVAVARSNESAQSFYDSGLALINTGDLRPSHQRSWAELWKGSSIEVIGAESLNRALIGCMFYLLGSFPYVNKEASAAFEFGGVSPGGLSNGSEDEDYHGHVFWDQDTWMYPSIALFYPALARAVLQYRVETLEGAQVNAQQMGCKGLKFAWESAVTGVDVCPEDVYSQQELHINGDVILAFQQYYYLTQDLELFQSGRGSEVVWGVADFWVSRVTWDSADQQYHIKGVIPPDEYYFTVDNSVFTNAVAQRSLEFAVELSALLAEVPPPAWQDIADKIKIPFDPELKFHPEFDGYKPGNKVKQADVVLLGFPLAFPMSPEIRRNDLEMYEAVTDPLGPAMTWGMFALGWLELGEAEKAQKLLQKCFKNVQKPFQVWSESADGSGCVNFLTGMGGFLQAVLFGYTGFRVQKEQLAFSPLLPLDVSALSVKGVCYLGHKMDWTITSEEVKVSVRKTDSKETFTLQVVLNSGSTLLLTPGQSVSFPRQPGHICQLKSSSSCWPI.

Residue 258 to 259 participates in substrate binding; sequence WD. The Proton donor role is filled by E388. Substrate is bound at residue 456 to 457; that stretch reads KQ.

Belongs to the glycosyl hydrolase 65 family.

It catalyses the reaction (5R)-5-O-[alpha-D-glucosyl-(1-&gt;2)-beta-D-galactosyl]-5-hydroxy-L-lysyl-[collagen] + H2O = (5R)-5-O-(beta-D-galactosyl)-5-hydroxy-L-lysyl-[collagen] + D-glucose. Its function is as follows. Catalyzes the hydrolysis of glucose from the disaccharide unit linked to hydroxylysine residues of collagen and collagen-like proteins. This is Protein-glucosylgalactosylhydroxylysine glucosidase from Danio rerio (Zebrafish).